Reading from the N-terminus, the 591-residue chain is V-type ATP synthase alpha chain (591 aa).

Residue 242–249 (GPFGAGKT) coordinates ATP.

It belongs to the ATPase alpha/beta chains family.

It carries out the reaction ATP + H2O + 4 H(+)(in) = ADP + phosphate + 5 H(+)(out). In terms of biological role, produces ATP from ADP in the presence of a proton gradient across the membrane. The V-type alpha chain is a catalytic subunit. This Chlamydia caviae (strain ATCC VR-813 / DSM 19441 / 03DC25 / GPIC) (Chlamydophila caviae) protein is V-type ATP synthase alpha chain.